Consider the following 212-residue polypeptide: Large ribosomal subunit protein uL3 (212 aa).

The interval 136–155 is disordered; it reads THGNSLSHRSNGSIGQNQTP. An N5-methylglutamine modification is found at Gln153.

It belongs to the universal ribosomal protein uL3 family. In terms of assembly, part of the 50S ribosomal subunit. Forms a cluster with proteins L14 and L19. Methylated by PrmB.

One of the primary rRNA binding proteins, it binds directly near the 3'-end of the 23S rRNA, where it nucleates assembly of the 50S subunit. The polypeptide is Large ribosomal subunit protein uL3 (Shewanella oneidensis (strain ATCC 700550 / JCM 31522 / CIP 106686 / LMG 19005 / NCIMB 14063 / MR-1)).